The following is an 827-amino-acid chain: NT-3 growth factor receptor (827 aa).

A signal peptide spans 1–31 (MDVSLCPTKCTFWRVFLLWSIWGDYLLSVLA). 2 disulfides stabilise this stretch: cysteine 32–cysteine 38 and cysteine 36–cysteine 45. The Extracellular segment spans residues 32–430 (CPANCLCSKT…ITVTHKPEED (399 aa)). 3 N-linked (GlcNAc...) asparagine glycosylation sites follow: asparagine 68, asparagine 72, and asparagine 79. LRR repeat units lie at residues 104 to 125 (GLQR…AFAK) and 128 to 149 (HLRY…LFQT). An LRRCT domain is found at 160–209 (NPFNCSCDIRWIQLWQEKGEANLQSQQLHCMNLDTAVILLRNMNITQCDL). The N-linked (GlcNAc...) asparagine glycan is linked to asparagine 163. 2 disulfide bridges follow: cysteine 164–cysteine 189 and cysteine 166–cysteine 207. 7 N-linked (GlcNAc...) asparagine glycosylation sites follow: asparagine 203, asparagine 218, asparagine 232, asparagine 259, asparagine 267, asparagine 272, and asparagine 294. 2 Ig-like C2-type domains span residues 210–300 (PEIS…VLLT) and 319–382 (HCIA…VATN). Cysteine 231 and cysteine 284 are oxidised to a cystine. A disulfide bridge links cysteine 320 with cysteine 362. Asparagine 375 and asparagine 388 each carry an N-linked (GlcNAc...) asparagine glycan. The chain crosses the membrane as a helical span at residues 431–455 (TFGVSIAVGLAAFACVLLVVLFIMI). At 456 to 827 (NKYGRRSKFG…ATPIYLDILG (372 aa)) the chain is on the cytoplasmic side. The residue at position 518 (tyrosine 518) is a Phosphotyrosine; by autocatalysis. The region spanning 540-812 (IVLKRELGEG…LNIKEIYKIL (273 aa)) is the Protein kinase domain. ATP contacts are provided by residues 546 to 554 (LGEGAFGKV) and lysine 574. Catalysis depends on aspartate 681, which acts as the Proton acceptor. 4 positions are modified to phosphotyrosine; by autocatalysis: tyrosine 707, tyrosine 711, tyrosine 712, and tyrosine 822.

This sequence belongs to the protein kinase superfamily. Tyr protein kinase family. Insulin receptor subfamily. Exists in a dynamic equilibrium between monomeric (low affinity) and dimeric (high affinity) structures. Interacts with PTPRS. Post-translationally, ligand-mediated auto-phosphorylation.

It localises to the membrane. It carries out the reaction L-tyrosyl-[protein] + ATP = O-phospho-L-tyrosyl-[protein] + ADP + H(+). In terms of biological role, receptor tyrosine kinase involved in nervous system and probably heart development. Upon binding of its ligand NTF3/neurotrophin-3, NTRK3 autophosphorylates and activates different signaling pathways, including the phosphatidylinositol 3-kinase/AKT and the MAPK pathways, that control cell survival and differentiation. The KT and KD isoforms fail to stimulate transformation, process outgrowth or survival. Isoform KI25 exhibits tyrosine phosphorylation in the absence of ligand and is unable to mediate survival of neuronal cells. This Gallus gallus (Chicken) protein is NT-3 growth factor receptor (NTRK3).